The primary structure comprises 336 residues: Phosphate acetyltransferase (336 aa).

This sequence belongs to the phosphate acetyltransferase and butyryltransferase family.

Its subcellular location is the cytoplasm. The enzyme catalyses acetyl-CoA + phosphate = acetyl phosphate + CoA. The protein operates within metabolic intermediate biosynthesis; acetyl-CoA biosynthesis; acetyl-CoA from acetate: step 2/2. This chain is Phosphate acetyltransferase (pta), found in Treponema pallidum (strain Nichols).